Reading from the N-terminus, the 338-residue chain is Lumican (338 aa).

A signal peptide spans 1–18 (MSLSAFTLFLALIGGTSG). The residue at position 19 (Gln19) is a Pyrrolidone carboxylic acid. A sulfotyrosine mark is found at Tyr20, Tyr21, Tyr23, and Tyr30. One can recognise an LRRNT domain in the interval 28–66 (SIYGQSSPNCAPECNCPESYPSAMYCDELKLKSVPMVPP). 10 LRR repeats span residues 67–88 (GIKY…AFEN), 91–114 (DLQW…VFSK), 117–137 (QLKK…PLPK), 138–159 (SLED…EGLV), 160–181 (NLTF…AAFK), 185–205 (SLEY…GLPV), 206–227 (SLLT…YFKR), 230–253 (ALQY…SFNV), 255–276 (SLVE…NENL), and 277–296 (ENYY…SFCK). N-linked (GlcNAc...) (keratan sulfate) asparagine glycosylation is present at Asn88. Asn127 carries an N-linked (GlcNAc...) (keratan sulfate) asparagine glycan. N-linked (GlcNAc...) (keratan sulfate) asparagine glycosylation occurs at Asn160. Residue Asn252 is glycosylated (N-linked (GlcNAc...) (keratan sulfate) asparagine). Cys295 and Cys328 are disulfide-bonded. Residue Ser304 is modified to Phosphoserine. An LRR 11 repeat occupies 305 to 326 (KIKHLRLDGNRISETSLPPDMY).

It belongs to the small leucine-rich proteoglycan (SLRP) family. SLRP class II subfamily. As to quaternary structure, binds to laminin. In terms of processing, sulfated on tyrosine residue(s). Post-translationally, contains keratan sulfate. As to expression, cornea and other tissues.

It localises to the secreted. Its subcellular location is the extracellular space. The protein resides in the extracellular matrix. This is Lumican (LUM) from Homo sapiens (Human).